Reading from the N-terminus, the 1484-residue chain is Ral GTPase-activating protein subunit beta (1484 aa).

Disordered stretches follow at residues 355–437 and 697–728; these read PRSD…APRR and GGEN…PDSE. At S359 the chain carries Phosphoserine. Phosphothreonine is present on residues T363 and T379. Composition is skewed to polar residues over residues 369-381, 392-428, and 701-725; these read SMPQ…TTPP, NKAT…TSSE, and NLKS…PTTP. A phosphoserine mark is found at S421 and S710. T724 carries the phosphothreonine modification. In terms of domain architecture, Rap-GAP spans 1138-1382; it reads IGYLDLLPCR…TTLEKEVPVI (245 aa). S1275 bears the Phosphoserine mark. The segment at 1301 to 1325 is disordered; that stretch reads DSLNSSQRLSPSSRMKKLPQGRPVP. A compositionally biased stretch (low complexity) spans 1302–1313; that stretch reads SLNSSQRLSPSS.

As to quaternary structure, component of the heterodimeric RalGAP1 complex with RALGAPA1 and of the heterodimeric RalGAP2 complex with RALGAPA2. Heterodimerization is required for activity. In terms of tissue distribution, detected in brain, thymus, lung, heart, spleen, liver and testis (at protein level).

In terms of biological role, non-catalytic subunit of the heterodimeric RalGAP1 and RalGAP2 complexes which act as GTPase activators for the Ras-like small GTPases RALA and RALB. In Rattus norvegicus (Rat), this protein is Ral GTPase-activating protein subunit beta.